The following is a 57-amino-acid chain: Large ribosomal subunit protein bL32 (57 aa).

The segment at 1–23 (MAVPKKKTSKSKRDKRRATWRHK) is disordered.

This sequence belongs to the bacterial ribosomal protein bL32 family.

This chain is Large ribosomal subunit protein bL32, found in Nostoc sp. (strain PCC 7120 / SAG 25.82 / UTEX 2576).